The primary structure comprises 65 residues: Precursor peptide TigB (65 aa).

TIGSVS motif repeat units lie at residues 16-21, 23-28, 33-38, 40-45, 47-52, and 54-59; these read TIGSVS. Methylcyclopropylglycine is present on residues Ile-17, Ile-24, Ile-34, Ile-41, Ile-48, and Ile-55.

Post-translationally, is subject to maturation by TigE, that catalyzes the formation of methylcyclopropylglycine (mCPG) residues from isoleucine residues residing in the repeating TIGSVS motifs.

In terms of biological role, precursor peptide which undergoes post-translational modifications by tailoring enzymes, leading to the mature natural product. This Paramaledivibacter caminithermalis (strain DSM 15212 / CIP 107654 / DViRD3) (Clostridium caminithermale) protein is Precursor peptide TigB.